A 199-amino-acid chain; its full sequence is Peptidyl-tRNA hydrolase (199 aa).

Residue Y15 participates in tRNA binding. H20 functions as the Proton acceptor in the catalytic mechanism. 3 residues coordinate tRNA: F66, N68, and N114.

This sequence belongs to the PTH family. As to quaternary structure, monomer.

It is found in the cytoplasm. The enzyme catalyses an N-acyl-L-alpha-aminoacyl-tRNA + H2O = an N-acyl-L-amino acid + a tRNA + H(+). In terms of biological role, hydrolyzes ribosome-free peptidyl-tRNAs (with 1 or more amino acids incorporated), which drop off the ribosome during protein synthesis, or as a result of ribosome stalling. Its function is as follows. Catalyzes the release of premature peptidyl moieties from peptidyl-tRNA molecules trapped in stalled 50S ribosomal subunits, and thus maintains levels of free tRNAs and 50S ribosomes. This is Peptidyl-tRNA hydrolase from Cupriavidus pinatubonensis (strain JMP 134 / LMG 1197) (Cupriavidus necator (strain JMP 134)).